The sequence spans 391 residues: Salivary protein TRIO (391 aa).

A signal peptide spans 1-24 (MCRGLSAVLILLVSLSAQLHVVVG). The N-linked (GlcNAc...) asparagine glycan is linked to Asn-323.

Female salivary gland (at protein level). Female saliva (at protein level). Not detected in female midgut, head and carcass (at protein level). Not detected in male tissues (at protein level).

The protein resides in the secreted. In terms of biological role, required for efficient probing on a mammalian host. Alters the local inflammatory response in the host skin following a mosquito bite by suppressing TNF-alpha/TNF expression. Its function is as follows. (Microbial infection) Contributes to optimal transmission of Plasmodium berghei sporozoites to mice. (Microbial infection) Contributes to optimal transmission of Plasmodium falciparum sporozoites to mammalian host. The chain is Salivary protein TRIO from Anopheles gambiae (African malaria mosquito).